Reading from the N-terminus, the 163-residue chain is Crossover junction endodeoxyribonuclease RuvC (163 aa).

Catalysis depends on residues Asp4, Glu65, and Asp138. Residues Asp4, Glu65, and Asp138 each coordinate Mg(2+).

It belongs to the RuvC family. As to quaternary structure, homodimer which binds Holliday junction (HJ) DNA. The HJ becomes 2-fold symmetrical on binding to RuvC with unstacked arms; it has a different conformation from HJ DNA in complex with RuvA. In the full resolvosome a probable DNA-RuvA(4)-RuvB(12)-RuvC(2) complex forms which resolves the HJ. Mg(2+) is required as a cofactor.

The protein resides in the cytoplasm. The catalysed reaction is Endonucleolytic cleavage at a junction such as a reciprocal single-stranded crossover between two homologous DNA duplexes (Holliday junction).. Its function is as follows. The RuvA-RuvB-RuvC complex processes Holliday junction (HJ) DNA during genetic recombination and DNA repair. Endonuclease that resolves HJ intermediates. Cleaves cruciform DNA by making single-stranded nicks across the HJ at symmetrical positions within the homologous arms, yielding a 5'-phosphate and a 3'-hydroxyl group; requires a central core of homology in the junction. The consensus cleavage sequence is 5'-(A/T)TT(C/G)-3'. Cleavage occurs on the 3'-side of the TT dinucleotide at the point of strand exchange. HJ branch migration catalyzed by RuvA-RuvB allows RuvC to scan DNA until it finds its consensus sequence, where it cleaves and resolves the cruciform DNA. This Corynebacterium diphtheriae (strain ATCC 700971 / NCTC 13129 / Biotype gravis) protein is Crossover junction endodeoxyribonuclease RuvC.